Reading from the N-terminus, the 211-residue chain is Glycerol-3-phosphate acyltransferase (211 aa).

The next 5 helical transmembrane spans lie at 5–25 (VILGLLALISYLLGSIPTGYL), 55–75 (GPGLVTFLVDVGKGLGAILVA), 85–105 (PVPAGWFEFVLLAIAFIAVLA), 126–146 (VLLALNAPTALATFGVFLVVL), and 168–188 (WFFTQSWPFVGFSVIAGAFVI).

It belongs to the PlsY family. In terms of assembly, probably interacts with PlsX.

It localises to the cell inner membrane. It carries out the reaction an acyl phosphate + sn-glycerol 3-phosphate = a 1-acyl-sn-glycero-3-phosphate + phosphate. It functions in the pathway lipid metabolism; phospholipid metabolism. Its function is as follows. Catalyzes the transfer of an acyl group from acyl-phosphate (acyl-PO(4)) to glycerol-3-phosphate (G3P) to form lysophosphatidic acid (LPA). This enzyme utilizes acyl-phosphate as fatty acyl donor, but not acyl-CoA or acyl-ACP. In Thermosynechococcus vestitus (strain NIES-2133 / IAM M-273 / BP-1), this protein is Glycerol-3-phosphate acyltransferase.